A 169-amino-acid polypeptide reads, in one-letter code: Putative tRNA (cytidine(34)-2'-O)-methyltransferase (169 aa).

S-adenosyl-L-methionine-binding residues include isoleucine 79, glycine 104, isoleucine 125, and serine 133.

It belongs to the class IV-like SAM-binding methyltransferase superfamily. RNA methyltransferase TrmH family. TrmL subfamily.

The protein localises to the cytoplasm. It carries out the reaction cytidine(34) in tRNA + S-adenosyl-L-methionine = 2'-O-methylcytidine(34) in tRNA + S-adenosyl-L-homocysteine + H(+). The enzyme catalyses 5-carboxymethylaminomethyluridine(34) in tRNA(Leu) + S-adenosyl-L-methionine = 5-carboxymethylaminomethyl-2'-O-methyluridine(34) in tRNA(Leu) + S-adenosyl-L-homocysteine + H(+). Functionally, could methylate the ribose at the nucleotide 34 wobble position in tRNA. In Listeria monocytogenes serotype 4b (strain F2365), this protein is Putative tRNA (cytidine(34)-2'-O)-methyltransferase.